A 125-amino-acid polypeptide reads, in one-letter code: UPF0231 protein HD_1708 (125 aa).

This sequence belongs to the UPF0231 family.

This chain is UPF0231 protein HD_1708, found in Haemophilus ducreyi (strain 35000HP / ATCC 700724).